Reading from the N-terminus, the 298-residue chain is Bifunctional protein FolD (298 aa).

NADP(+) is bound by residues 166–168 (GRS), serine 191, and isoleucine 232.

It belongs to the tetrahydrofolate dehydrogenase/cyclohydrolase family. Homodimer.

The catalysed reaction is (6R)-5,10-methylene-5,6,7,8-tetrahydrofolate + NADP(+) = (6R)-5,10-methenyltetrahydrofolate + NADPH. It catalyses the reaction (6R)-5,10-methenyltetrahydrofolate + H2O = (6R)-10-formyltetrahydrofolate + H(+). It participates in one-carbon metabolism; tetrahydrofolate interconversion. Catalyzes the oxidation of 5,10-methylenetetrahydrofolate to 5,10-methenyltetrahydrofolate and then the hydrolysis of 5,10-methenyltetrahydrofolate to 10-formyltetrahydrofolate. This Maricaulis maris (strain MCS10) (Caulobacter maris) protein is Bifunctional protein FolD.